Reading from the N-terminus, the 645-residue chain is Sister chromatid cohesion protein 1 (645 aa).

3 disordered regions span residues Phe292–Glu311, Gln495–Glu527, and Cys619–Val645.

Belongs to the rad21 family. As to quaternary structure, component of the cohesin complex, composed of the smc-1 and smc-3 heterodimer attached via their hinge domain, scc-1 which links them, and scc-3. Interacts with smc-1, smc-3, scc-3 and tim-1.

The protein resides in the nucleus. It localises to the chromosome. Its subcellular location is the cytoplasm. Functionally, cleavable component of the cohesin complex involved in chromosome cohesion during cell cycle. The cohesin complex is required for the cohesion of sister chromatids after DNA replication. The cohesin complex apparently forms a large proteinaceous ring within which sister chromatids can be trapped. At metaphase-anaphase transition, this protein is cleaved and dissociates from chromatin, allowing sister chromatids to segregate. This chain is Sister chromatid cohesion protein 1, found in Caenorhabditis elegans.